The sequence spans 139 residues: uncharacterized protein (139 aa).

To M.tuberculosis Rv2798c.

This is an uncharacterized protein from Mycobacterium tuberculosis (strain CDC 1551 / Oshkosh).